We begin with the raw amino-acid sequence, 271 residues long: ELH (271 aa).

Residues 1–28 form the signal peptide; it reads MKRPNNRPTNTMSLILCLTLSSLCVSSQ. 2 consecutive propeptides follow at residues 29 to 95 and 162 to 184; these read SASV…NEKR and AAGG…RRKR. The disordered stretch occupies residues 162 to 190; sequence AAGGMEQSEGQNPETESHSRRKRSVLTPS. The residue at position 241 (K241) is a Lysine amide.

Belongs to the molluscan ELH family. As to expression, bag cell neurons.

It localises to the secreted. Its function is as follows. ELH acts as a neurotransmitter locally, upon neurons of the abdominal ganglion and as a hormone by diffusing into the circulating hemolymph and modulating the activity of other organs. It specifically causes contraction of smooth muscle in the ovotestis and expulsion of the egg string. Alpha-BCP decreases the activity of a cluster of neurons in the left upper quadrant of the abdominal ganglion. Functionally, beta-BCP specifically excites 2 neurons, L1 and R1, in the abdominal ganglion. This Aplysia californica (California sea hare) protein is ELH.